We begin with the raw amino-acid sequence, 305 residues long: Autophagy-related protein 27 (305 aa).

The N-terminal stretch at 1 to 22 (MARYKGLSILSLFAVFSSLASA) is a signal peptide. Over 23 to 242 (ELDCSNIKVD…EDGGSAPSGH (220 aa)) the chain is Lumenal. In terms of domain architecture, MRH spans 24 to 231 (LDCSNIKVDG…EWKTKYACEN (208 aa)). 2 disulfides stabilise this stretch: Cys-26-Cys-66 and Cys-74-Cys-81. Residue Asn-58 is glycosylated (N-linked (GlcNAc...) asparagine). Residue Asn-85 is glycosylated (N-linked (GlcNAc...) asparagine). Residues Cys-156 and Cys-229 are joined by a disulfide bond. The tract at residues 163–202 (LEGLESPKPDGDKKKDGEKKDDDKKDNKDKEGKSKRDGEE) is disordered. A helical transmembrane segment spans residues 243–263 (WGFFTWVIVLYVVLVSLPLLS). Residues 264–305 (ERVTNVRCHSQPVPVHFGLSDIRLVAQLQPVWSSRVGLASSQ) are Cytoplasmic-facing.

It belongs to the ATG27 family.

The protein resides in the cytoplasmic vesicle membrane. It localises to the golgi apparatus membrane. The protein localises to the mitochondrion membrane. Its subcellular location is the preautophagosomal structure membrane. Functionally, effector of phosphatidylinositol 3-phosphate kinase signaling. Regulates the cytoplasm to vacuole transport (Cvt) vesicle formation. Plays a role in ATG protein retrieval from the pre-autophagosomal structure (PAS). The sequence is that of Autophagy-related protein 27 from Arthroderma benhamiae (strain ATCC MYA-4681 / CBS 112371) (Trichophyton mentagrophytes).